A 341-amino-acid polypeptide reads, in one-letter code: Uroporphyrinogen decarboxylase (341 aa).

Substrate is bound by residues 23-27 (RQAGR), D73, Y147, S202, and H318.

The protein belongs to the uroporphyrinogen decarboxylase family. Homodimer.

Its subcellular location is the cytoplasm. The enzyme catalyses uroporphyrinogen III + 4 H(+) = coproporphyrinogen III + 4 CO2. The protein operates within porphyrin-containing compound metabolism; protoporphyrin-IX biosynthesis; coproporphyrinogen-III from 5-aminolevulinate: step 4/4. Functionally, catalyzes the decarboxylation of four acetate groups of uroporphyrinogen-III to yield coproporphyrinogen-III. The protein is Uroporphyrinogen decarboxylase of Novosphingobium aromaticivorans (strain ATCC 700278 / DSM 12444 / CCUG 56034 / CIP 105152 / NBRC 16084 / F199).